An 80-amino-acid chain; its full sequence is Exodeoxyribonuclease 7 small subunit (80 aa).

It belongs to the XseB family. In terms of assembly, heterooligomer composed of large and small subunits.

It localises to the cytoplasm. It catalyses the reaction Exonucleolytic cleavage in either 5'- to 3'- or 3'- to 5'-direction to yield nucleoside 5'-phosphates.. Bidirectionally degrades single-stranded DNA into large acid-insoluble oligonucleotides, which are then degraded further into small acid-soluble oligonucleotides. In Aliivibrio salmonicida (strain LFI1238) (Vibrio salmonicida (strain LFI1238)), this protein is Exodeoxyribonuclease 7 small subunit.